The chain runs to 89 residues: Small ribosomal subunit protein uS15 (89 aa).

It belongs to the universal ribosomal protein uS15 family. As to quaternary structure, part of the 30S ribosomal subunit. Forms a bridge to the 50S subunit in the 70S ribosome, contacting the 23S rRNA.

One of the primary rRNA binding proteins, it binds directly to 16S rRNA where it helps nucleate assembly of the platform of the 30S subunit by binding and bridging several RNA helices of the 16S rRNA. Its function is as follows. Forms an intersubunit bridge (bridge B4) with the 23S rRNA of the 50S subunit in the ribosome. The polypeptide is Small ribosomal subunit protein uS15 (Micrococcus luteus (strain ATCC 4698 / DSM 20030 / JCM 1464 / CCM 169 / CCUG 5858 / IAM 1056 / NBRC 3333 / NCIMB 9278 / NCTC 2665 / VKM Ac-2230) (Micrococcus lysodeikticus)).